Here is a 567-residue protein sequence, read N- to C-terminus: Proline--tRNA ligase (567 aa).

It belongs to the class-II aminoacyl-tRNA synthetase family. ProS type 1 subfamily. As to quaternary structure, homodimer.

Its subcellular location is the cytoplasm. The catalysed reaction is tRNA(Pro) + L-proline + ATP = L-prolyl-tRNA(Pro) + AMP + diphosphate. Its function is as follows. Catalyzes the attachment of proline to tRNA(Pro) in a two-step reaction: proline is first activated by ATP to form Pro-AMP and then transferred to the acceptor end of tRNA(Pro). As ProRS can inadvertently accommodate and process non-cognate amino acids such as alanine and cysteine, to avoid such errors it has two additional distinct editing activities against alanine. One activity is designated as 'pretransfer' editing and involves the tRNA(Pro)-independent hydrolysis of activated Ala-AMP. The other activity is designated 'posttransfer' editing and involves deacylation of mischarged Ala-tRNA(Pro). The misacylated Cys-tRNA(Pro) is not edited by ProRS. This chain is Proline--tRNA ligase, found in Staphylococcus aureus (strain bovine RF122 / ET3-1).